We begin with the raw amino-acid sequence, 94 residues long: Progonadoliberin-3 (94 aa).

The N-terminal stretch at 1–23 (MEGKGRVLVQLLMLACVLEVSLC) is a signal peptide. Q24 is subject to Pyrrolidone carboxylic acid. G33 carries the glycine amide modification.

The protein belongs to the GnRH family.

Its subcellular location is the secreted. Functionally, stimulates the secretion of gonadotropins. This Carassius auratus (Goldfish) protein is Progonadoliberin-3 (gnrh3).